The primary structure comprises 414 residues: Transforming growth factor beta-2 proprotein (414 aa).

The N-terminal stretch at 1–20 (MHYCVLSAFLLLHLVTAALS) is a signal peptide. N-linked (GlcNAc...) asparagine glycans are attached at residues Asn-72, Asn-140, and Asn-241. Disulfide bonds link Cys-309-Cys-318, Cys-317-Cys-380, Cys-346-Cys-411, and Cys-350-Cys-413.

It belongs to the TGF-beta family. Interacts with the serine proteases, HTRA1 and HTRA3. Interacts with ASPN. Interacts with MFAP5. In terms of assembly, interacts with Transforming growth factor beta-2 (TGF-beta-2) chain; interaction is non-covalent and maintains (TGF-beta-2) in a latent state. Interacts with LRRC32/GARP; leading to regulate activation of TGF-beta-2. Interacts with NREP; the interaction results in a decrease in TGFB2 autoinduction. As to quaternary structure, transforming growth factor beta-2: Homodimer; disulfide-linked. Transforming growth factor beta-2: Interacts with TGF-beta receptors (TGFBR1 and TGFBR2), leading to signal transduction. In terms of processing, the precursor proprotein is cleaved in the Golgi apparatus to form Transforming growth factor beta-2 (TGF-beta-2) and Latency-associated peptide (LAP) chains, which remain non-covalently linked, rendering TGF-beta-2 inactive.

The protein localises to the secreted. It is found in the extracellular space. Its subcellular location is the extracellular matrix. In terms of biological role, precursor of the Latency-associated peptide (LAP) and Transforming growth factor beta-2 (TGF-beta-2) chains, which constitute the regulatory and active subunit of TGF-beta-2, respectively. Its function is as follows. Required to maintain the Transforming growth factor beta-2 (TGF-beta-2) chain in a latent state during storage in extracellular matrix. Associates non-covalently with TGF-beta-2 and regulates its activation via interaction with 'milieu molecules', such as LTBP1 and LRRC32/GARP, that control activation of TGF-beta-2. Multifunctional protein that regulates various processes such as angiogenesis and heart development. Activation into mature form follows different steps: following cleavage of the proprotein in the Golgi apparatus, Latency-associated peptide (LAP) and Transforming growth factor beta-2 (TGF-beta-2) chains remain non-covalently linked rendering TGF-beta-2 inactive during storage in extracellular matrix. At the same time, LAP chain interacts with 'milieu molecules', such as LTBP1 and LRRC32/GARP, that control activation of TGF-beta-2 and maintain it in a latent state during storage in extracellular milieus. Once activated following release of LAP, TGF-beta-2 acts by binding to TGF-beta receptors (TGFBR1 and TGFBR2), which transduce signal. This chain is Transforming growth factor beta-2 proprotein (TGFB2), found in Mustela putorius furo (European domestic ferret).